The following is a 537-amino-acid chain: Asparagine-rich protein (537 aa).

Disordered stretches follow at residues 1–22 (YNNN…QNTN), 187–254 (NMNI…NNNF), 336–372 (YNNN…YGYD), 399–479 (LNNN…DDWG), and 509–528 (DLSK…MKKD). Composition is skewed to low complexity over residues 336-347 (YNNNESNTANPN) and 399-469 (LNNN…NQNN). Residues 470 to 479 (NEDEDDDDWG) are compositionally biased toward acidic residues. The segment covering 509–518 (DLSKKGNDGK) has biased composition (basic and acidic residues).

The sequence is that of Asparagine-rich protein from Plasmodium falciparum.